Consider the following 120-residue polypeptide: MTETVNSARATARFVRVSPMKARRVIDLVRGKSVEDALAILKYAPQAASEDVAKVVASAAANAENNFGLDPRTLVISEAYADEGPTMRRFRPRAQGRAFHIRKRSSHITVVVESQKGSAQ.

It belongs to the universal ribosomal protein uL22 family. As to quaternary structure, part of the 50S ribosomal subunit.

Functionally, this protein binds specifically to 23S rRNA; its binding is stimulated by other ribosomal proteins, e.g. L4, L17, and L20. It is important during the early stages of 50S assembly. It makes multiple contacts with different domains of the 23S rRNA in the assembled 50S subunit and ribosome. Its function is as follows. The globular domain of the protein is located near the polypeptide exit tunnel on the outside of the subunit, while an extended beta-hairpin is found that lines the wall of the exit tunnel in the center of the 70S ribosome. This is Large ribosomal subunit protein uL22 from Corynebacterium urealyticum (strain ATCC 43042 / DSM 7109).